Here is a 223-residue protein sequence, read N- to C-terminus: Pre-protein VI (223 aa).

The propeptide occupies 1 to 27 (MAYSRLAPHCGLPVYGHHIGNSEMSGG). The tract at residues 28–51 (FSWSSLGSSLSSGLSRIGSFLGST) is amphipathic alpha-helix essential for membrane lytic activity. Residues 29–50 (SWSSLGSSLSSGLSRIGSFLGS) form an involved in endosomal membrane lysis region. Interaction with hexon protein stretches follow at residues 45–71 (GSFLGSTAQRIGNSQGFQQAKEGFLKS) and 206–212 (LEDMLGD). 2 consecutive short sequence motifs (nuclear export signal) follow at residues 64 to 73 (AKEGFLKSGV) and 204 to 215 (SALEDMLGDGVC). The tract at residues 213–223 (GVCYRSKRYCY) is binds to importin alpha/beta, involved in hexon nuclear import.

Belongs to the adenoviridae protein VI family. In terms of assembly, interacts with hexon protein; this interaction allows nuclear import of hexon trimers and possibly pre-capsid assembly. Interacts (via C-terminal NLS) with importin alpha/beta. As to quaternary structure, interacts (via PPxY motif) with host NEDD4 ubiquitine ligase; this interaction might play a role in virus intracellular transport during entry. Part of a complex composed of the core-capsid bridging protein, the endosome lysis protein VI and the hexon-linking protein VIII; these interactions bridge the virus core to the capsid. Interacts with peripentonal hexons; this interaction stabilizes the capsid by gluing two peripentonal hexons together and joining them with an adjacent group-of-nine hexon. Heterodimer with the viral protease; disulfide-linked. Interacts with the viral protease. In terms of processing, ubiquitinated by Nedd4 following partial capsid disassembly; which might play a role in intracellular virus movement during entry. Contains the major nuclear import and export signals. Proteolytically removed during virion maturation. The processing of the C-terminus turns the precursor into a mature viral structural protein and abrogates its ability to promote hexon import and act as a potential chaperone protein.

It is found in the host nucleus. It localises to the host cytoplasm. The protein resides in the virion. Its function is as follows. During virus assembly, promotes hexon trimers nuclear import through nuclear pore complexes via an importin alpha/beta-dependent mechanism. By analogy to herpesviruses capsid assembly, might act as a chaperone to promote the formation of the icosahedral capsid. Structural component of the virion that provides increased stability to the particle shell through its interaction with the core-capsid bridging protein and the hexon-linking protein VIII. Fibers shedding during virus entry into host cell allows the endosome lysis protein to be exposed as a membrane-lytic peptide. Exhibits pH-independent membrane fragmentation activity and probably mediates viral rapid escape from host endosome via organellar membrane lysis. It is not clear if it then remains partially associated with the capsid and involved in the intracellular microtubule-dependent transport of capsid to the nucleus, or if it is lost during endosomal penetration. Functionally, cofactor that activates the viral protease. Binds to viral protease in a 1:1 ratio. The protein is Pre-protein VI of Pantherophis guttatus (Corn snake).